The following is a 211-amino-acid chain: Protein-methionine-sulfoxide reductase heme-binding subunit MsrQ (211 aa).

The next 6 helical transmembrane spans lie at 10–30, 54–74, 82–102, 116–136, 153–173, and 178–198; these read WLKVCLHLAGLLPFLWLVWAI, FLLAALLITPLARYAKQPLLI, LWCFAWATLHLTSYALLELGV, PYLTLGIISWVILLALAFTST, FVYLVAILAPIHYLWSVKIIS, and IYAGLAVLLLALRYKKLLSLF.

Belongs to the MsrQ family. In terms of assembly, heterodimer of a catalytic subunit (MsrP) and a heme-binding subunit (MsrQ). The cofactor is FMN. Requires heme b as cofactor.

The protein resides in the cell inner membrane. Functionally, part of the MsrPQ system that repairs oxidized periplasmic proteins containing methionine sulfoxide residues (Met-O), using respiratory chain electrons. Thus protects these proteins from oxidative-stress damage caused by reactive species of oxygen and chlorine generated by the host defense mechanisms. MsrPQ is essential for the maintenance of envelope integrity under bleach stress, rescuing a wide series of structurally unrelated periplasmic proteins from methionine oxidation, including the primary periplasmic chaperone SurA and the lipoprotein Pal. MsrQ provides electrons for reduction to the reductase catalytic subunit MsrP, using the quinone pool of the respiratory chain. The polypeptide is Protein-methionine-sulfoxide reductase heme-binding subunit MsrQ (Escherichia coli O6:H1 (strain CFT073 / ATCC 700928 / UPEC)).